Reading from the N-terminus, the 422-residue chain is Testin (422 aa).

Residues 92–199 form the PET domain; the sequence is MILTSPVAAK…GDVKLPKEVE (108 aa). Positions 135–165 are disordered; it reads QPVAGSEGAQYRKKQLAKQLPAHDQDPSKCH. Positions 155-165 are enriched in basic and acidic residues; it reads PAHDQDPSKCH. LIM zinc-binding domains are found at residues 234-299, 300-359, and 360-422; these read YYCF…SEKP, RCAG…NHAV, and SCQG…KMSS.

Belongs to the prickle / espinas / testin family. Expressed in the animal hemisphere at the 4-cell stage. By stage 18, expressed in cells adjacent to the anterior neural plate. In late neurula, expressed in the cranial neural crest. At tail bud stages, expressed strongly in the head, ventral to the developing eye, branchial arches and lateral line placodes. Also localized in the otic vesicle, dorsal fin and notochord with weaker expression at intersomitic junctions of tail bud embryos.

It localises to the cytoplasm. The protein resides in the cell cortex. Its subcellular location is the cell junction. It is found in the focal adhesion. Its function is as follows. Scaffold protein that may play a role in cell adhesion, cell spreading and in the reorganization of the actin cytoskeleton. May inhibit cell growth. Regulates cranial neural crest migration. Acts together with prickle1 to control axial elongation. This Xenopus laevis (African clawed frog) protein is Testin.